An 899-amino-acid polypeptide reads, in one-letter code: AP-3 complex subunit delta (899 aa).

12 HEAT repeats span residues 37 to 74 (QSPEQLHEFLTRVLSECREEVKHADFNMKTNAVLKLTY), 155 to 192 (ELARDICEDLFLMLHSTKPYIRKKAVTALFKVFLQYPE), 194 to 229 (LRDNFEKFVDRLEDDDLSVVSATVSVICELSKHNPQ), 231 to 267 (FIQLSPILYQMLIKVDNNWVIIRLLKLFTNLAQIEPK), 268 to 305 (LRVKILPNVLELMDSTTAISVVYESINCIVKGNMLNSD), 308 to 344 (DSAVACLDKLHDFCTSNDPNLRYLSCVLFYKIGKINT), 345 to 382 (DFIANFDVLILRLLVDVDVSIRSKTLELLEGIVTEDNL), 384 to 428 (DFVQ…ITAM), 480 to 518 (RTLAQIVQLVKSEDITARLPGVLKECIWCLGEYSSLLDN), 536 to 580 (ELQQ…LIIS), 590 to 613 (SEALEFLRLCLDSLSEDASDSLPL), and 614 to 656 (LLTE…TESE). Disordered stretches follow at residues 668-701 (DGIVSPDVSDTESDSEMYVPGAAPKDKGSSPTHE), 741-768 (NLSNSKPSSSGSLVRLSSESKAKEKKKK), 782-801 (GVNTADVTDDRPSNTPSARN), and 849-899 (AAEE…LTTE). Positions 743–759 (SNSKPSSSGSLVRLSSE) are enriched in low complexity. Residues 841–862 (QRLLDESAAAEEEVVVVKKKKR) are a coiled coil. A compositionally biased stretch (basic residues) spans 857–880 (VKKKKRSKDGSKSSKKKSRSKSKP).

Belongs to the adaptor complexes large subunit family. Adaptor protein complex 3 (AP-3) is a heterotetramer composed of 2 large adaptins (APL5 and APL6), a medium adaptin (APM3) and a small adaptin (APS3).

Its subcellular location is the golgi apparatus. It localises to the cytoplasmic vesicle. It is found in the clathrin-coated vesicle membrane. Its function is as follows. Part of the AP-3 complex, an adaptor-related complex which is not clathrin-associated. The complex is associated with the Golgi region as well as more peripheral structures. It facilitates the budding of vesicles from the Golgi membrane and may be directly involved in trafficking to the vacuole. This Eremothecium gossypii (strain ATCC 10895 / CBS 109.51 / FGSC 9923 / NRRL Y-1056) (Yeast) protein is AP-3 complex subunit delta (APL5).